The sequence spans 137 residues: Putative pre-16S rRNA nuclease (137 aa).

The protein belongs to the YqgF nuclease family.

The protein resides in the cytoplasm. In terms of biological role, could be a nuclease involved in processing of the 5'-end of pre-16S rRNA. The sequence is that of Putative pre-16S rRNA nuclease from Actinobacillus pleuropneumoniae serotype 7 (strain AP76).